The chain runs to 90 residues: DNA-binding protein HU-1 (90 aa).

A Phosphothreonine modification is found at Thr-4.

The protein belongs to the bacterial histone-like protein family. Homodimer.

In terms of biological role, histone-like DNA-binding protein which is capable of wrapping DNA to stabilize it, and thus to prevent its denaturation under extreme environmental conditions. The protein is DNA-binding protein HU-1 (hup2) of Halalkalibacterium halodurans (strain ATCC BAA-125 / DSM 18197 / FERM 7344 / JCM 9153 / C-125) (Bacillus halodurans).